The primary structure comprises 53 residues: UPF0391 membrane protein Bxeno_A1464 (53 aa).

A run of 2 helical transmembrane segments spans residues 5–25 (AAIFFIIAIIAAVFGFGGIAA) and 30–50 (IAKVLFFIFVVIFLVTLLMGV).

Belongs to the UPF0391 family.

Its subcellular location is the cell membrane. The chain is UPF0391 membrane protein Bxeno_A1464 from Paraburkholderia xenovorans (strain LB400).